We begin with the raw amino-acid sequence, 417 residues long: Serine hydroxymethyltransferase (417 aa).

(6S)-5,6,7,8-tetrahydrofolate-binding positions include leucine 121 and 125–127 (GHL). Lysine 229 bears the N6-(pyridoxal phosphate)lysine mark. Residue 355 to 357 (SSF) participates in (6S)-5,6,7,8-tetrahydrofolate binding.

The protein belongs to the SHMT family. In terms of assembly, homodimer. It depends on pyridoxal 5'-phosphate as a cofactor.

The protein resides in the cytoplasm. It catalyses the reaction (6R)-5,10-methylene-5,6,7,8-tetrahydrofolate + glycine + H2O = (6S)-5,6,7,8-tetrahydrofolate + L-serine. It participates in one-carbon metabolism; tetrahydrofolate interconversion. The protein operates within amino-acid biosynthesis; glycine biosynthesis; glycine from L-serine: step 1/1. Catalyzes the reversible interconversion of serine and glycine with tetrahydrofolate (THF) serving as the one-carbon carrier. This reaction serves as the major source of one-carbon groups required for the biosynthesis of purines, thymidylate, methionine, and other important biomolecules. Also exhibits THF-independent aldolase activity toward beta-hydroxyamino acids, producing glycine and aldehydes, via a retro-aldol mechanism. The protein is Serine hydroxymethyltransferase of Baumannia cicadellinicola subsp. Homalodisca coagulata.